A 132-amino-acid chain; its full sequence is Small ribosomal subunit protein uS11 (132 aa).

The protein belongs to the universal ribosomal protein uS11 family. In terms of assembly, part of the 30S ribosomal subunit. Interacts with proteins S7 and S18. Binds to IF-3.

In terms of biological role, located on the platform of the 30S subunit, it bridges several disparate RNA helices of the 16S rRNA. Forms part of the Shine-Dalgarno cleft in the 70S ribosome. This chain is Small ribosomal subunit protein uS11, found in Cupriavidus pinatubonensis (strain JMP 134 / LMG 1197) (Cupriavidus necator (strain JMP 134)).